The chain runs to 611 residues: Alpha-1,2-mannosyltransferase ALG9 (611 aa).

Residues 1-10 (MASRRARQRL) are compositionally biased toward basic residues. Residues 1 to 51 (MASRRARQRLKGGGGGGGGGGDAGPAAEKLEQLGSREAGAEPRPESGNKAG) form a disordered region. The Lumenal portion of the chain corresponds to 1-135 (MASRRARQRL…FHARILQTNK (135 aa)). Positions 11 to 23 (KGGGGGGGGGGDA) are enriched in gly residues. Residue N77 is glycosylated (N-linked (GlcNAc...) asparagine). A helical membrane pass occupies residues 136–156 (ILVFYFLRCLLAFVSCVCELY). Residues 157 to 171 (FYKAVCKKFGLHVSR) are Cytoplasmic-facing. A helical membrane pass occupies residues 172–192 (MMLAFLVLSTGMFCSSSAFLP). Topologically, residues 193–213 (SSFCMYTTLIAMTGWYMDKTP) are lumenal. Residues 214–234 (IAVLGVAAGAILGWPFSAALG) form a helical membrane-spanning segment. Residues 235-249 (LPIAFDLLARKHRWK) are Cytoplasmic-facing. Residues 250–270 (SFLLWSLVALALFLVPVVVID) form a helical membrane-spanning segment. The Lumenal segment spans residues 271-310 (SYYYGKLVVAPLNIVLYNVFTSHGPDLYGTEPWYFYLING). The chain crosses the membrane as a helical span at residues 311–331 (FLNFNVAFALALLVLPLTFLM). The Cytoplasmic segment spans residues 332-342 (EYLLQRFHVQN). A helical transmembrane segment spans residues 343–363 (LGHPYWLTLAPMYIWFIIFFI). Topologically, residues 364 to 370 (QPHKEER) are lumenal. The helical transmembrane segment at 371–391 (FLFPVYPLICLCGAVALSALQ) threads the bilayer. Residues 392–405 (KCYHFVFQRYRLEH) lie on the Cytoplasmic side of the membrane. Residues 406-426 (YTVTSNWLALGTVFLFGLLSF) form a helical membrane-spanning segment. The Lumenal portion of the chain corresponds to 427-611 (SRSVALFRGY…AKPSRKKSGG (185 aa)). N550 and N593 each carry an N-linked (GlcNAc...) asparagine glycan.

The protein belongs to the glycosyltransferase 22 family.

It localises to the endoplasmic reticulum membrane. It catalyses the reaction an alpha-D-Man-(1-&gt;2)-alpha-D-Man-(1-&gt;2)-alpha-D-Man-(1-&gt;3)-[alpha-D-Man-(1-&gt;3)-alpha-D-Man-(1-&gt;6)]-beta-D-Man-(1-&gt;4)-beta-D-GlcNAc-(1-&gt;4)-alpha-D-GlcNAc-diphospho-di-trans,poly-cis-dolichol + a di-trans,poly-cis-dolichyl beta-D-mannosyl phosphate = an alpha-D-Man-(1-&gt;2)-alpha-D-Man-(1-&gt;2)-alpha-D-Man-(1-&gt;3)-[alpha-D-Man-(1-&gt;2)-alpha-D-Man-(1-&gt;3)-alpha-D-Man-(1-&gt;6)]-beta-D-Man-(1-&gt;4)-beta-D-GlcNAc-(1-&gt;4)-alpha-D-GlcNAc-diphospho-di-trans,poly-cis-dolichol + a di-trans,poly-cis-dolichyl phosphate + H(+). It carries out the reaction an alpha-D-Man-(1-&gt;2)-alpha-D-Man-(1-&gt;2)-alpha-D-Man-(1-&gt;3)-[alpha-D-Man-(1-&gt;2)-alpha-D-Man-(1-&gt;3)-[alpha-D-Man-(1-&gt;6)]-alpha-D-Man-(1-&gt;6)]-beta-D-Man-(1-&gt;4)-beta-D-GlcNAc-(1-&gt;4)-alpha-D-GlcNAc-diphospho-di-trans,poly-cis-dolichol + a di-trans,poly-cis-dolichyl beta-D-mannosyl phosphate = an alpha-D-Man-(1-&gt;2)-alpha-D-Man-(1-&gt;2)-alpha-D-Man-(1-&gt;3)-[alpha-D-Man-(1-&gt;2)-alpha-D-Man-(1-&gt;3)-[alpha-D-Man-(1-&gt;2)-alpha-D-Man-(1-&gt;6)]-alpha-D-Man-(1-&gt;6)]-beta-D-Man-(1-&gt;4)-beta-D-GlcNAc-(1-&gt;4)-alpha-D-GlcNAc-diphospho-di-trans,poly-cis-dolichol + a di-trans,poly-cis-dolichyl phosphate + H(+). Its pathway is protein modification; protein glycosylation. Mannosyltransferase that operates in the biosynthetic pathway of dolichol-linked oligosaccharides, the glycan precursors employed in protein asparagine (N)-glycosylation. The assembly of dolichol-linked oligosaccharides begins on the cytosolic side of the endoplasmic reticulum membrane and finishes in its lumen. The sequential addition of sugars to dolichol pyrophosphate produces dolichol-linked oligosaccharides containing fourteen sugars, including two GlcNAcs, nine mannoses and three glucoses. Once assembled, the oligosaccharide is transferred from the lipid to nascent proteins by oligosaccharyltransferases. In the lumen of the endoplasmic reticulum, catalyzes the addition of the seventh and ninth alpha-1,2-linked mannose residues to Man(6)GlcNAc(2)-PP-dolichol and Man(8)GlcNAc(2)-PP-dolichol respectively. The chain is Alpha-1,2-mannosyltransferase ALG9 from Mus musculus (Mouse).